The primary structure comprises 181 residues: Calmodulin-like protein 6 (181 aa).

EF-hand domains lie at 33-68, 69-104, 107-142, and 143-178; these read EQIK…LGIN, PTKS…YHEK, NQES…AGEP, and LNEV…ESFK. Ca(2+)-binding residues include D156, D158, D160, T162, and E167.

It belongs to the calmodulin family. Calglandulin subfamily. In terms of tissue distribution, expressed in prostate, thymus, heart, skeleton muscle, bone marrow and ovary.

The protein resides in the cytoplasm. It is found in the nucleus. This is Calmodulin-like protein 6 (CALML6) from Homo sapiens (Human).